The chain runs to 528 residues: Linear element-associated protein hop1 (528 aa).

Residues 11-212 (TKSDFTLKNL…RGEFKDIVSF (202 aa)) form the HORMA domain. The PHD-type zinc-finger motif lies at 334–385 (LLNCECGDSTEDSEMFQCERCDGWVHCACYGFESDSDPRQPNQLLCYTCLLV). 8 residues coordinate Zn(2+): cysteine 337, cysteine 339, cysteine 351, cysteine 354, histidine 359, cysteine 362, cysteine 379, and cysteine 382. Residues 507–528 (RPKKVSKTSNTKETDTMKPLRI) form a disordered region. Over residues 516 to 528 (NTKETDTMKPLRI) the composition is skewed to basic and acidic residues.

Interacts (via N-terminus) with rec10; the interaction is direct. Interacts (via C-terminus) with rec15 (via C-terminus); the interaction is direct.

The protein resides in the nucleus. It localises to the chromosome. Functionally, facilitates initiation of meiotic recombination and DNA double-strand break (DSB) formation at DSB hotspot sites by enhancing the interaction between rec10 and rec15. The polypeptide is Linear element-associated protein hop1 (Schizosaccharomyces pombe (strain 972 / ATCC 24843) (Fission yeast)).